The chain runs to 112 residues: MNSVFTIIFVLCALQVAASFRQSFGPSMSEESASMQLLRELQHNMMESAHRPMPRARRVPAPGETRACGRKLISLVMAVCGDLCNPQEGKDIATECCGNQCSDDYIRSACCP.

A signal peptide spans 1–19 (MNSVFTIIFVLCALQVAAS). Positions 20–58 (FRQSFGPSMSEESASMQLLRELQHNMMESAHRPMPRARR) are cleaved as a propeptide — removed; by convertase egl-3. 4 disulfides stabilise this stretch: cysteine 68-cysteine 97, cysteine 80-cysteine 110, cysteine 84-cysteine 111, and cysteine 96-cysteine 101.

It belongs to the insulin family. In terms of processing, may be processed by serine endoprotease bli-4. Expressed by ASI and ASJ sensory neurons.

Its subcellular location is the secreted. Its function is as follows. Probable insulin-like peptide which negatively regulates synapse development at the neuromuscular junctions. Probably acts as a daf-2/InsR agonist ligand to prevent dauer formation under optimal environmental conditions. Acts on AWC sensory neurons to regulate high salt chemotaxis responses. This Caenorhabditis elegans protein is Probable insulin-like peptide beta-type 5 (ins-6).